We begin with the raw amino-acid sequence, 504 residues long: Maturase K (504 aa).

It belongs to the intron maturase 2 family. MatK subfamily.

It is found in the plastid. The protein localises to the chloroplast. Usually encoded in the trnK tRNA gene intron. Probably assists in splicing its own and other chloroplast group II introns. This chain is Maturase K, found in Arabidopsis thaliana (Mouse-ear cress).